Reading from the N-terminus, the 112-residue chain is Protein preY, mitochondrial (112 aa).

The N-terminal 34 residues, Met-1–Ser-34, are a transit peptide targeting the mitochondrion. The 47-residue stretch at His-49 to Gln-95 folds into the TRM112 domain.

It belongs to the PREY family. Interacts (via TRM112 domain) with NDUFAF5; the interaction is direct and stabilizes NDUFAF5 protein. Interacts with COQ5; the interaction is direct, stabilizes COQ5 protein and associates PYURF with COQ enzyme complex.

The protein localises to the mitochondrion. Its function is as follows. In mitochondria, S-adenosylmethionine-dependent methyltransferase chaperone that supports both coenzyme Q biosynthesis, by stabilizing its components, such as COQ5, and NADH:ubiquinone oxidoreductase complex (complex I, MT-ND1) assembly, by stabilizing complex I assembly factors, such as NDUFAF5. This Rattus norvegicus (Rat) protein is Protein preY, mitochondrial (Pyurf).